A 362-amino-acid chain; its full sequence is Probable prephenate dehydrogenase NovF (362 aa).

The Prephenate/arogenate dehydrogenase domain maps to 2–283; it reads RTAVIIGTGM…GIDGSNRVPG (282 aa).

The protein belongs to the prephenate/arogenate dehydrogenase family.

It carries out the reaction prephenate + NAD(+) = 3-(4-hydroxyphenyl)pyruvate + CO2 + NADH. Its pathway is antibiotic biosynthesis; novobiocin biosynthesis. Its function is as follows. Probable prephenate dehydrogenase that produces 4-hydroxyphenylpyruvate (4HPP) in the novobiocin biosynthesis pathway. Novobiocin is an aminocoumarin family antibiotic that targets bacterial DNA gyrases. This Streptomyces niveus (Streptomyces spheroides) protein is Probable prephenate dehydrogenase NovF (novF).